A 98-amino-acid chain; its full sequence is MSLIHINVFLAFTTSLMGLLMYRSHLMSSLLCLEGMMLSLFIMATMMVLNSHFTLASMMPIILLVFAACEAALGLSLLVMISNTYGTDYVQNLNLLQC.

3 helical membrane-spanning segments follow: residues 1–21, 29–49, and 61–81; these read MSLI…GLLM, SLLC…MMVL, and IILL…LVMI.

This sequence belongs to the complex I subunit 4L family. In terms of assembly, core subunit of respiratory chain NADH dehydrogenase (Complex I) which is composed of 45 different subunits.

Its subcellular location is the mitochondrion inner membrane. It catalyses the reaction a ubiquinone + NADH + 5 H(+)(in) = a ubiquinol + NAD(+) + 4 H(+)(out). Core subunit of the mitochondrial membrane respiratory chain NADH dehydrogenase (Complex I) which catalyzes electron transfer from NADH through the respiratory chain, using ubiquinone as an electron acceptor. Part of the enzyme membrane arm which is embedded in the lipid bilayer and involved in proton translocation. The polypeptide is NADH-ubiquinone oxidoreductase chain 4L (MT-ND4L) (Ceratotherium simum (White rhinoceros)).